Reading from the N-terminus, the 355-residue chain is Uroporphyrinogen decarboxylase (355 aa).

Substrate is bound by residues 27–31 (RQAGR), F46, D77, Y154, S209, and H327.

The protein belongs to the uroporphyrinogen decarboxylase family. Homodimer.

It is found in the cytoplasm. The enzyme catalyses uroporphyrinogen III + 4 H(+) = coproporphyrinogen III + 4 CO2. It functions in the pathway porphyrin-containing compound metabolism; protoporphyrin-IX biosynthesis; coproporphyrinogen-III from 5-aminolevulinate: step 4/4. In terms of biological role, catalyzes the decarboxylation of four acetate groups of uroporphyrinogen-III to yield coproporphyrinogen-III. This is Uroporphyrinogen decarboxylase from Nitrosomonas europaea (strain ATCC 19718 / CIP 103999 / KCTC 2705 / NBRC 14298).